Here is a 247-residue protein sequence, read N- to C-terminus: Zinc finger protein YPR015C (247 aa).

2 C2H2-type zinc fingers span residues 185–207 (KQCP…YLIH) and 213–237 (FKCT…LRTH).

This chain is Zinc finger protein YPR015C, found in Saccharomyces cerevisiae (strain ATCC 204508 / S288c) (Baker's yeast).